The following is a 430-amino-acid chain: Nacrein-like protein P2 (430 aa).

The N-linked (GlcNAc...) asparagine glycan is linked to Asn27. The region spanning 33–429 (AGFSYDRSIC…KNKVTVYKSF (397 aa)) is the Alpha-carbonic anhydrase domain. His132, His134, and His157 together coordinate Zn(2+). Positions 201 to 312 (DEPDDEECKR…GENGHKHGCR (112 aa)) are disordered. Basic and acidic residues predominate over residues 207 to 219 (ECKRILKGHHPDN). Positions 220–304 (NENGNGDNGN…NNGENGNNGE (85 aa)) are enriched in low complexity. A run of 27 repeats spans residues 225–227 (GDN), 228–230 (GNN), 231–233 (GYN), 234–236 (GDN), 237–239 (GNN), 240–242 (GDN), 243–245 (GNN), 246–248 (GYN), 249–251 (GDN), 252–254 (GNN), 255–257 (GVN), 258–260 (GNN), 261–263 (GYN), 264–266 (GDN), 267–269 (GNN), 270–272 (GDN), 273–275 (GNN), 276–278 (GYN), 279–281 (GDN), 282–284 (GNN), 285–287 (GDN), 288–290 (GNN), 291–293 (GEN), 294–296 (GNN), 297–299 (GEN), 300–301 (GN), and 303–305 (GEN). The segment at 225 to 305 (GDNGNNGYNG…NGENGNNGEN (81 aa)) is 27 X 3 AA approximate tandem repeats of G-X-N. 370 to 371 (TT) contributes to the substrate binding site.

The protein belongs to the alpha-carbonic anhydrase family. Homooligomer; disulfide-linked. May also be disulfide-linked to insoluble organic matrix. Zn(2+) is required as a cofactor. In terms of tissue distribution, expressed in the mantle.

Its subcellular location is the secreted. The protein resides in the extracellular space. It localises to the extracellular matrix. The catalysed reaction is hydrogencarbonate + H(+) = CO2 + H2O. Acts as a negative regulator for calcification in the shells of mollusks. May function both as a calcium concentrator and as a carbonic anhydrase required for production of carbonate ions, which are assembled to CaCO(3) at mineralization sites. Is important for shell formation in both the calcitic prismatic layer and the aragonitic nacreous layer. Shows inhibitory activity of crystal formation when present in free state but, when attached to the insoluble matrix, may regulate the form and size of aragonite crystal. This Mizuhopecten yessoensis (Japanese scallop) protein is Nacrein-like protein P2.